An 847-amino-acid polypeptide reads, in one-letter code: Putative membrane protein SCO5905 (847 aa).

The next 12 membrane-spanning stretches (helical) occupy residues 18–38, 187–207, 215–235, 248–268, 302–322, 326–346, 381–401, 539–559, 562–582, 600–620, 643–663, and 672–692; these read AVVV…APAL, GGDK…LLAI, LVPL…GAIL, ASIM…IITA, IVLA…GFGP, LGVA…VLLL, VKVA…LLGY, DTTL…VLLL, LLAP…TLGA, VTAY…IFIM, TGGV…VLMT, and FGFA…PLLV. The disordered stretch occupies residues 708 to 729; sequence RPGTPQTPSTPTSEPPSADAPA. 3 helical membrane-spanning segments follow: residues 744–764, 778–798, and 808–828; these read FTWI…GMYL, FGTL…LVAI, and TIFA…EIWA.

The protein belongs to the resistance-nodulation-cell division (RND) (TC 2.A.6) family. MmpL subfamily.

The protein localises to the cell membrane. This Streptomyces coelicolor (strain ATCC BAA-471 / A3(2) / M145) protein is Putative membrane protein SCO5905.